A 262-amino-acid polypeptide reads, in one-letter code: Thrombin-like enzyme gyroxin B1.4 (262 aa).

Positions 1–18 (MVLIRVLANLLILQLSYA) are cleaved as a signal peptide. The propeptide occupies 19–262 (QKSSELVIGG…AGNTIVNCPP (244 aa)). The 229-residue stretch at 25-253 (VIGGDECNIN…HLDWIQSIIA (229 aa)) folds into the Peptidase S1 domain. Cystine bridges form between C31-C165, C52-C68, C102-C260, C144-C214, C176-C193, and C204-C229. H67 (charge relay system) is an active-site residue. A glycan (N-linked (GlcNAc...) asparagine) is linked at N105. D112 functions as the Charge relay system in the catalytic mechanism. S208 (charge relay system) is an active-site residue.

The protein belongs to the peptidase S1 family. Snake venom subfamily. Monomer. As to expression, expressed by the venom gland.

The protein resides in the secreted. Functionally, thrombin-like snake venom serine protease. Displays a specificity similar to trypsin. Releases only fibrinopeptide A in the conversion of fibrinogen to fibrin. Shows coagulant, esterase and amidase activities. Reversibly increases the permeability of the blood brain barrier (BBB) in mice. Induces the barrel rotation syndrome in mice, which is manifested by gyroxin-like, rapid rolling motions. This syndrome may be due to its effect on BBB permeability, and certainly also to other actions affecting endogenous substrates present in the endothelium, nervous tissues or blood. The chain is Thrombin-like enzyme gyroxin B1.4 from Crotalus durissus terrificus (South American rattlesnake).